The sequence spans 311 residues: 4-diphosphocytidyl-2-C-methyl-D-erythritol kinase (311 aa).

Residue Lys10 is part of the active site. 105–115 (PVAGGMAGGSA) is a binding site for ATP. Asp146 is an active-site residue.

Belongs to the GHMP kinase family. IspE subfamily.

It catalyses the reaction 4-CDP-2-C-methyl-D-erythritol + ATP = 4-CDP-2-C-methyl-D-erythritol 2-phosphate + ADP + H(+). It participates in isoprenoid biosynthesis; isopentenyl diphosphate biosynthesis via DXP pathway; isopentenyl diphosphate from 1-deoxy-D-xylulose 5-phosphate: step 3/6. Functionally, catalyzes the phosphorylation of the position 2 hydroxy group of 4-diphosphocytidyl-2C-methyl-D-erythritol. In Corynebacterium glutamicum (strain ATCC 13032 / DSM 20300 / JCM 1318 / BCRC 11384 / CCUG 27702 / LMG 3730 / NBRC 12168 / NCIMB 10025 / NRRL B-2784 / 534), this protein is 4-diphosphocytidyl-2-C-methyl-D-erythritol kinase.